The following is a 578-amino-acid chain: Probable cytochrome c oxidase subunit 1-alpha (578 aa).

The segment at 1-21 (MSILNEPQGASAAEDSYENEL) is disordered. A helical transmembrane segment spans residues 44-64 (IGTMYLVTSFAFFVIGGVMAL). Histidine 90 contributes to the Fe(II)-heme a binding site. Helical transmembrane passes span 93–113 (IMLLMFATPLFAGFANWIMPL), 125–145 (LNMFAYWLYLFGSTIAVGGFL), 174–194 (LWIMGLAFSGFGTILGSVNFI), 217–237 (VLLTGVLVLLAFPVLAAALFA), 262–282 (LFWFFGHPEVYIIALPFFGIV), and 294–314 (IFGYMGLIGATIAIAGLSVTV). Positions 268 and 272 each coordinate Cu cation. The segment at residues 268–272 (HPEVY) is a cross-link (1'-histidyl-3'-tyrosine (His-Tyr)). Positions 317 and 318 each coordinate Cu cation. Helical transmembrane passes span 319 to 339 (MYVTGGVLLPFFSFMTFLIAV) and 363 to 383 (MLWSTGFLITFLFGGLTGVIL). Histidine 401 is a heme a3 binding site. The next 3 membrane-spanning stretches (helical) occupy residues 402-422 (FHYVVFGTVVFAMFAGFHFWW), 437-457 (ITFWTLFVGFHGTFLVQHWLG), and 480-500 (ISTISSFLLGMSILPFFYNIW). Histidine 403 is a binding site for Fe(II)-heme a.

The protein belongs to the heme-copper respiratory oxidase family. In terms of assembly, associates with subunits II, III and IV to form cytochrome c oxidase. The cofactor is Cu(2+). Requires heme as cofactor.

Its subcellular location is the cell membrane. The enzyme catalyses 4 Fe(II)-[cytochrome c] + O2 + 8 H(+)(in) = 4 Fe(III)-[cytochrome c] + 2 H2O + 4 H(+)(out). It participates in energy metabolism; oxidative phosphorylation. Cytochrome c oxidase is the component of the respiratory chain that catalyzes the reduction of oxygen to water. Subunits 1-3 form the functional core of the enzyme complex. CO I is the catalytic subunit of the enzyme. Electrons originating in cytochrome c are transferred via the copper A center of subunit 2 and heme A of subunit 1 to the bimetallic center formed by heme A3 and copper B. The protein is Probable cytochrome c oxidase subunit 1-alpha (ctaD1) of Streptomyces coelicolor (strain ATCC BAA-471 / A3(2) / M145).